Here is a 689-residue protein sequence, read N- to C-terminus: Methionine--tRNA ligase (689 aa).

The 'HIGH' region signature appears at 19-29 (PYPTGDLHIGH). Zn(2+)-binding residues include Cys-150, Cys-153, Cys-162, and Cys-166. The 'KMSKS' region motif lies at 338 to 342 (GLSTS). Thr-341 lines the ATP pocket. Positions 591 to 689 (EFQALDLRVG…EDSEPGTKVM (99 aa)) constitute a tRNA-binding domain.

It belongs to the class-I aminoacyl-tRNA synthetase family. MetG type 1 subfamily. In terms of assembly, homodimer. The cofactor is Zn(2+).

It localises to the cytoplasm. The catalysed reaction is tRNA(Met) + L-methionine + ATP = L-methionyl-tRNA(Met) + AMP + diphosphate. Functionally, is required not only for elongation of protein synthesis but also for the initiation of all mRNA translation through initiator tRNA(fMet) aminoacylation. This chain is Methionine--tRNA ligase, found in Halobacterium salinarum (strain ATCC 700922 / JCM 11081 / NRC-1) (Halobacterium halobium).